The primary structure comprises 102 residues: Large ribosomal subunit protein P1 (102 aa).

Positions 69-91 (APAAAAEEKKEEEKKEEKKEEDT) are disordered. The segment covering 74–90 (AEEKKEEEKKEEKKEED) has biased composition (basic and acidic residues).

It belongs to the eukaryotic ribosomal protein P1/P2 family. In terms of assembly, part of the 50S ribosomal subunit. Homodimer, it forms part of the ribosomal stalk which helps the ribosome interact with GTP-bound translation factors. Forms a heptameric uL10/P0(P1)2(P1)2(P1)2 complex, where uL10/P0 forms an elongated spine to which the P1 dimers bind in a sequential fashion.

Its function is as follows. Forms part of the ribosomal stalk, playing a central role in the interaction of the ribosome with GTP-bound translation factors. The chain is Large ribosomal subunit protein P1 from Methanocaldococcus jannaschii (strain ATCC 43067 / DSM 2661 / JAL-1 / JCM 10045 / NBRC 100440) (Methanococcus jannaschii).